The primary structure comprises 90 residues: Phaiodotoxin (90 aa).

A signal peptide spans 1 to 18; it reads MKTIPLLFLLFIYFECDG. One can recognise an LCN-type CS-alpha/beta domain in the interval 19 to 90; that stretch reads KFIRHKDESF…CFGALESKCA (72 aa). Cystine bridges form between Cys31–Cys56, Cys41–Cys68, Cys45–Cys70, and Cys81–Cys89.

In terms of tissue distribution, expressed by the venom gland.

It localises to the secreted. Functionally, sodium channel (Nav) specific neurotoxin. Causes impairment of movement and mild paralysis in crickets at a dose of 0.5 ug per animal. A dose of 0.8 ug per cricket causes clear flaccid paralysis. A dose of 1.0 ug per cricket causes death within 2 hours. Is not toxic to mice at a dose of 100 ug per 20 g mouse weight. This chain is Phaiodotoxin, found in Anuroctonus phaiodactylus (Mafia scorpion).